The following is a 182-amino-acid chain: uncharacterized protein (182 aa).

2 helical membrane-spanning segments follow: residues 76 to 96 (LLLA…LALA) and 114 to 130 (LDLL…LIGA).

The protein localises to the membrane. This is an uncharacterized protein from Saccharomyces cerevisiae (strain ATCC 204508 / S288c) (Baker's yeast).